Here is a 510-residue protein sequence, read N- to C-terminus: Histidine ammonia-lyase (510 aa).

A cross-link (5-imidazolinone (Ala-Gly)) is located at residues 143-145 (ASG). S144 is modified (2,3-didehydroalanine (Ser)).

It belongs to the PAL/histidase family. Contains an active site 4-methylidene-imidazol-5-one (MIO), which is formed autocatalytically by cyclization and dehydration of residues Ala-Ser-Gly.

Its subcellular location is the cytoplasm. The catalysed reaction is L-histidine = trans-urocanate + NH4(+). It participates in amino-acid degradation; L-histidine degradation into L-glutamate; N-formimidoyl-L-glutamate from L-histidine: step 1/3. The polypeptide is Histidine ammonia-lyase (Shewanella woodyi (strain ATCC 51908 / MS32)).